The chain runs to 152 residues: Ubiquitin-activating enzyme E1 Y (152 aa).

The Glycyl thioester intermediate role is filled by Cys51.

Belongs to the ubiquitin-activating E1 family. In terms of assembly, monomer.

The catalysed reaction is ATP + ubiquitin + [E1 ubiquitin-activating enzyme]-L-cysteine = AMP + diphosphate + S-ubiquitinyl-[E1 ubiquitin-activating enzyme]-L-cysteine.. It functions in the pathway protein modification; protein ubiquitination. In terms of biological role, activates ubiquitin by first adenylating its C-terminal glycine residue with ATP, and thereafter linking this residue to the side chain of a cysteine residue in E1, yielding a ubiquitin-E1 thioester and free AMP. The Y chromosome form could be involved in the survival and proliferation of differentiating spermatogonia. In Osphranter rufus (Red kangaroo), this protein is Ubiquitin-activating enzyme E1 Y (UBE1Y).